The chain runs to 129 residues: Phosphoribosyl-AMP cyclohydrolase (129 aa).

Residue Asp-78 coordinates Mg(2+). Cys-79 is a binding site for Zn(2+). Mg(2+)-binding residues include Asp-80 and Asp-82. The Zn(2+) site is built by Cys-96 and Cys-103.

The protein belongs to the PRA-CH family. In terms of assembly, homodimer. Requires Mg(2+) as cofactor. Zn(2+) is required as a cofactor.

The protein localises to the cytoplasm. The catalysed reaction is 1-(5-phospho-beta-D-ribosyl)-5'-AMP + H2O = 1-(5-phospho-beta-D-ribosyl)-5-[(5-phospho-beta-D-ribosylamino)methylideneamino]imidazole-4-carboxamide. Its pathway is amino-acid biosynthesis; L-histidine biosynthesis; L-histidine from 5-phospho-alpha-D-ribose 1-diphosphate: step 3/9. In terms of biological role, catalyzes the hydrolysis of the adenine ring of phosphoribosyl-AMP. This Nitrosomonas europaea (strain ATCC 19718 / CIP 103999 / KCTC 2705 / NBRC 14298) protein is Phosphoribosyl-AMP cyclohydrolase.